A 321-amino-acid polypeptide reads, in one-letter code: Probable pectate lyase A (321 aa).

An N-terminal signal peptide occupies residues 1–18 (MKFVATLIACGLSGLALA). The N-linked (GlcNAc...) asparagine glycan is linked to asparagine 93. Ca(2+) contacts are provided by aspartate 134, aspartate 163, and aspartate 167. Arginine 220 is a catalytic residue. An N-linked (GlcNAc...) asparagine glycan is attached at asparagine 238.

This sequence belongs to the polysaccharide lyase 1 family. It depends on Ca(2+) as a cofactor.

It is found in the secreted. The catalysed reaction is Eliminative cleavage of (1-&gt;4)-alpha-D-galacturonan to give oligosaccharides with 4-deoxy-alpha-D-galact-4-enuronosyl groups at their non-reducing ends.. In terms of biological role, pectinolytic enzyme consist of four classes of enzymes: pectin lyase, polygalacturonase, pectin methylesterase and rhamnogalacturonase. Among pectinolytic enzymes, pectin lyase is the most important in depolymerization of pectin, since it cleaves internal glycosidic bonds of highly methylated pectins. Favors pectate, the anion, over pectin, the methyl ester. The sequence is that of Probable pectate lyase A (plyA) from Aspergillus fumigatus (strain ATCC MYA-4609 / CBS 101355 / FGSC A1100 / Af293) (Neosartorya fumigata).